A 205-amino-acid polypeptide reads, in one-letter code: Fibrillarin-like rRNA/tRNA 2'-O-methyltransferase (205 aa).

S-adenosyl-L-methionine contacts are provided by residues 60–61 (ST), 76–77 (EF), 101–102 (DA), and 121–124 (DIAQ).

Belongs to the methyltransferase superfamily. Fibrillarin family. In terms of assembly, interacts with nop5. Component of box C/D small ribonucleoprotein (sRNP) particles that contain rpl7ae, FlpA and nop5, plus a guide RNA.

Involved in pre-rRNA and tRNA processing. Utilizes the methyl donor S-adenosyl-L-methionine to catalyze the site-specific 2'-hydroxyl methylation of ribose moieties in rRNA and tRNA. Site specificity is provided by a guide RNA that base pairs with the substrate. Methylation occurs at a characteristic distance from the sequence involved in base pairing with the guide RNA. The polypeptide is Fibrillarin-like rRNA/tRNA 2'-O-methyltransferase (Methanospirillum hungatei JF-1 (strain ATCC 27890 / DSM 864 / NBRC 100397 / JF-1)).